The sequence spans 171 residues: MERSHQHQQLRKEEHDTLSKLKQMPVESLNLEAISIATNLYRSAQRLRVKMETEVLSTYNLSWTAFSILYDLWVWGALETRKIAELSGISTATASNVIKTLEKKSFCRKSIDTRDRRLVFVSITDSGKQAIEELYPEFHKGETELIAGMTKDEQKILTGLLRKVADNLHTT.

Residues 33-166 (AISIATNLYR…LTGLLRKVAD (134 aa)) enclose the HTH marR-type domain. The H-T-H motif DNA-binding region spans 80–103 (TRKIAELSGISTATASNVIKTLEK).

This is an uncharacterized protein from Bacillus subtilis (strain 168).